Here is a 354-residue protein sequence, read N- to C-terminus: Nicotinate-nucleotide--dimethylbenzimidazole phosphoribosyltransferase (354 aa).

The Proton acceptor role is filled by E319.

It belongs to the CobT family.

It carries out the reaction 5,6-dimethylbenzimidazole + nicotinate beta-D-ribonucleotide = alpha-ribazole 5'-phosphate + nicotinate + H(+). It participates in nucleoside biosynthesis; alpha-ribazole biosynthesis; alpha-ribazole from 5,6-dimethylbenzimidazole: step 1/2. Catalyzes the synthesis of alpha-ribazole-5'-phosphate from nicotinate mononucleotide (NAMN) and 5,6-dimethylbenzimidazole (DMB). In Chlorobium chlorochromatii (strain CaD3), this protein is Nicotinate-nucleotide--dimethylbenzimidazole phosphoribosyltransferase.